We begin with the raw amino-acid sequence, 581 residues long: Bifunctional lycopene cyclase/phytoene synthase (581 aa).

Residues 1 to 243 form a lycopene beta-cyclase region; the sequence is MGFDYALVHL…IVFGQLAFDN (243 aa). The next 7 membrane-spanning stretches (helical) occupy residues 3-23, 35-55, 65-85, 120-140, 152-172, 173-193, and 221-241; these read FDYA…LTLL, KVAF…SYLI, HVII…FFVV, LKRL…WFCV, ILIW…QFII, GLPF…LWIV, and IEEA…QLAF. The interval 250 to 581 is phytoene synthase; it reads AFPHLFPDPS…RVLVAWRTLN (332 aa).

In the N-terminal section; belongs to the lycopene beta-cyclase family. The protein in the C-terminal section; belongs to the phytoene/squalene synthase family.

Its subcellular location is the membrane. It carries out the reaction all-trans-lycopene = gamma-carotene. It catalyses the reaction gamma-carotene = all-trans-beta-carotene. The catalysed reaction is 2 (2E,6E,10E)-geranylgeranyl diphosphate = 15-cis-phytoene + 2 diphosphate. It participates in carotenoid biosynthesis; beta-carotene biosynthesis. Its pathway is carotenoid biosynthesis; phytoene biosynthesis; all-trans-phytoene from geranylgeranyl diphosphate: step 1/1. Its function is as follows. Bifunctional enzyme that catalyzes the reactions from geranylgeranyl diphosphate to phytoene (phytoene synthase) and lycopene to beta-carotene via the intermediate gamma-carotene (lycopene cyclase). The protein is Bifunctional lycopene cyclase/phytoene synthase of Leptosphaeria maculans (strain JN3 / isolate v23.1.3 / race Av1-4-5-6-7-8) (Blackleg fungus).